Consider the following 471-residue polypeptide: UDP-N-acetylmuramate--L-alanine ligase (471 aa).

Residue 114 to 120 coordinates ATP; it reads GTHGKTT.

It belongs to the MurCDEF family.

Its subcellular location is the cytoplasm. The catalysed reaction is UDP-N-acetyl-alpha-D-muramate + L-alanine + ATP = UDP-N-acetyl-alpha-D-muramoyl-L-alanine + ADP + phosphate + H(+). It functions in the pathway cell wall biogenesis; peptidoglycan biosynthesis. Its function is as follows. Cell wall formation. The polypeptide is UDP-N-acetylmuramate--L-alanine ligase (Methylobacterium nodulans (strain LMG 21967 / CNCM I-2342 / ORS 2060)).